The chain runs to 236 residues: Alpha-acetolactate decarboxylase (236 aa).

This sequence belongs to the alpha-acetolactate decarboxylase family.

The enzyme catalyses (2S)-2-acetolactate + H(+) = (R)-acetoin + CO2. Its pathway is polyol metabolism; (R,R)-butane-2,3-diol biosynthesis; (R,R)-butane-2,3-diol from pyruvate: step 2/3. Converts acetolactate into acetoin. The chain is Alpha-acetolactate decarboxylase (aldB) from Lactococcus lactis subsp. cremoris (strain MG1363).